A 185-amino-acid polypeptide reads, in one-letter code: UPF0215 protein APE_0476.1 (185 aa).

It belongs to the UPF0215 family.

This chain is UPF0215 protein APE_0476.1, found in Aeropyrum pernix (strain ATCC 700893 / DSM 11879 / JCM 9820 / NBRC 100138 / K1).